Consider the following 254-residue polypeptide: Small ribosomal subunit protein uS3 (254 aa).

The region spanning 39 to 109 (IRNYISARLK…EVKIDVIEVI (71 aa)) is the KH type-2 domain. A disordered region spans residues 220–254 (EEMKKMQERRNDSRGRGRGDGRGAKRRRRPAAKKA). Residues 221-242 (EMKKMQERRNDSRGRGRGDGRG) are compositionally biased toward basic and acidic residues. Positions 243 to 254 (AKRRRRPAAKKA) are enriched in basic residues.

Belongs to the universal ribosomal protein uS3 family. As to quaternary structure, part of the 30S ribosomal subunit. Forms a tight complex with proteins S10 and S14.

Binds the lower part of the 30S subunit head. Binds mRNA in the 70S ribosome, positioning it for translation. In Chlorobaculum parvum (strain DSM 263 / NCIMB 8327) (Chlorobium vibrioforme subsp. thiosulfatophilum), this protein is Small ribosomal subunit protein uS3.